A 280-amino-acid chain; its full sequence is MNELRLLGPAEIRDLAELIGVAPTKRLGQNFVIDANTVRRIVRVAGVEAGEVVVEVGPGLGSLTLGLLEAGARVVAVEIDGRLAERLPLTVAQLAPEAAGRLTVVHSDALAVTELPERPGRLVANLPYNVSVPVLLHLLERVPSLRSGVVMVQAEVGQRIAAGPGSKVYGAPSVKAAWYGVWRTAGTVSRQIFWPVPNVDSILVGFERHATEPGDDELRKRTFALVDAAFQQRRKTLRQSLAPVYGDPAAAGAALEAAGVAPRRRGEQLTLADFVRLAAR.

S-adenosyl-L-methionine contacts are provided by asparagine 30, valine 32, glycine 57, glutamate 78, aspartate 108, and asparagine 125.

This sequence belongs to the class I-like SAM-binding methyltransferase superfamily. rRNA adenine N(6)-methyltransferase family. RsmA subfamily.

Its subcellular location is the cytoplasm. The catalysed reaction is adenosine(1518)/adenosine(1519) in 16S rRNA + 4 S-adenosyl-L-methionine = N(6)-dimethyladenosine(1518)/N(6)-dimethyladenosine(1519) in 16S rRNA + 4 S-adenosyl-L-homocysteine + 4 H(+). Its function is as follows. Specifically dimethylates two adjacent adenosines (A1518 and A1519) in the loop of a conserved hairpin near the 3'-end of 16S rRNA in the 30S particle. May play a critical role in biogenesis of 30S subunits. This is Ribosomal RNA small subunit methyltransferase A from Leifsonia xyli subsp. xyli (strain CTCB07).